The following is a 274-amino-acid chain: tRNA-cytidine(32) 2-sulfurtransferase (274 aa).

A PP-loop motif motif is present at residues 40–45 (SGGKDS). Positions 115, 118, and 206 each coordinate [4Fe-4S] cluster.

This sequence belongs to the TtcA family. In terms of assembly, homodimer. The cofactor is Mg(2+). [4Fe-4S] cluster is required as a cofactor.

The protein localises to the cytoplasm. It carries out the reaction cytidine(32) in tRNA + S-sulfanyl-L-cysteinyl-[cysteine desulfurase] + AH2 + ATP = 2-thiocytidine(32) in tRNA + L-cysteinyl-[cysteine desulfurase] + A + AMP + diphosphate + H(+). Its pathway is tRNA modification. Functionally, catalyzes the ATP-dependent 2-thiolation of cytidine in position 32 of tRNA, to form 2-thiocytidine (s(2)C32). The sulfur atoms are provided by the cysteine/cysteine desulfurase (IscS) system. The polypeptide is tRNA-cytidine(32) 2-sulfurtransferase (Stutzerimonas stutzeri (strain A1501) (Pseudomonas stutzeri)).